The sequence spans 1448 residues: DNA-directed RNA polymerase subunit beta' (1448 aa).

Zn(2+) contacts are provided by Cys66, Cys68, Cys81, and Cys84. Residues Asp474, Asp476, and Asp478 each contribute to the Mg(2+) site. Residues Cys814, Cys888, Cys895, and Cys898 each coordinate Zn(2+). The interval 1408–1448 (LEELQAAIGGDGESPSGDGAAGDGAPSEEDVEQIEASGSEN) is disordered.

The protein belongs to the RNA polymerase beta' chain family. The RNAP catalytic core consists of 2 alpha, 1 beta, 1 beta' and 1 omega subunit. When a sigma factor is associated with the core the holoenzyme is formed, which can initiate transcription. It depends on Mg(2+) as a cofactor. Requires Zn(2+) as cofactor.

It carries out the reaction RNA(n) + a ribonucleoside 5'-triphosphate = RNA(n+1) + diphosphate. Its function is as follows. DNA-dependent RNA polymerase catalyzes the transcription of DNA into RNA using the four ribonucleoside triphosphates as substrates. In Salinibacter ruber (strain DSM 13855 / M31), this protein is DNA-directed RNA polymerase subunit beta'.